The sequence spans 30 residues: Trypsin inhibitor 2 (30 aa).

3 disulfides stabilise this stretch: Cys2/Cys19, Cys9/Cys21, and Cys15/Cys27.

It belongs to the protease inhibitor I7 (squash-type serine protease inhibitor) family.

The protein resides in the secreted. Inhibits trypsin. This is Trypsin inhibitor 2 from Ecballium elaterium (Squirting cucumber).